The sequence spans 290 residues: Pyridoxal kinase PdxY (290 aa).

Substrate is bound by residues S12 and 47 to 48; that span reads TQ. Residues D114, E151, K184, and 211 to 214 contribute to the ATP site; that span reads RPLL. Residue D225 participates in substrate binding.

It belongs to the pyridoxine kinase family. PdxY subfamily. Homodimer. The cofactor is Mg(2+).

The catalysed reaction is pyridoxal + ATP = pyridoxal 5'-phosphate + ADP + H(+). Its pathway is cofactor metabolism; pyridoxal 5'-phosphate salvage; pyridoxal 5'-phosphate from pyridoxal: step 1/1. Pyridoxal kinase involved in the salvage pathway of pyridoxal 5'-phosphate (PLP). Catalyzes the phosphorylation of pyridoxal to PLP. This Pseudomonas fluorescens (strain SBW25) protein is Pyridoxal kinase PdxY.